A 585-amino-acid polypeptide reads, in one-letter code: Glycerol-3-phosphate acyltransferase 1 (585 aa).

3 helical membrane-spanning segments follow: residues 126 to 146, 334 to 354, and 356 to 376; these read FFPY…AILL, TPLA…LAVF, and ISVG…MSGV. The HXXXXD motif motif lies at 403 to 408; the sequence is HRTLLD.

It belongs to the GPAT/DAPAT family. As to expression, highly expressed in developing siliques and flower buds. Weakly or not expressed in roots, seedlings and leaves.

It localises to the membrane. It is found in the mitochondrion. The catalysed reaction is sn-glycerol 3-phosphate + an acyl-CoA = a 1-acyl-sn-glycero-3-phosphate + CoA. Its pathway is phospholipid metabolism; CDP-diacylglycerol biosynthesis; CDP-diacylglycerol from sn-glycerol 3-phosphate: step 1/3. Its function is as follows. Esterifies acyl-group from acyl-ACP to the sn-1 position of glycerol-3-phosphate, an essential step in glycerolipid biosynthesis. Involved in pollen development, by being required for tapetum differentiation and male fertility. In addition to the sporophytic effect, it also exerts a gametophytic effect on pollen performance. This Arabidopsis thaliana (Mouse-ear cress) protein is Glycerol-3-phosphate acyltransferase 1 (GPAT1).